A 1041-amino-acid chain; its full sequence is Desmoglein-4 (1041 aa).

The first 23 residues, 1–23 (MDWLLFRNICLLILFMVVLGVNS), serve as a signal peptide directing secretion. Residues 24 to 49 (EFIVEVKELDIENGTTTWQTVRRQKR) constitute a propeptide that is removed on maturation. Cadherin domains are found at residues 50–157 (EWIK…PPVF), 158–269 (TQNV…FPIL), 270–385 (EKTS…GPTF), and 389–497 (SMTF…CPVI). The Extracellular segment spans residues 50–634 (EWIKFAAACR…RQSNVGLGPA (585 aa)). Asn110 carries N-linked (GlcNAc...) asparagine glycosylation. Residue Asn545 is glycosylated (N-linked (GlcNAc...) asparagine). Residues 635–655 (GIGMIILGLLLLLLSPLLLLM) form a helical membrane-spanning segment. The Cytoplasmic segment spans residues 656-1041 (CCCKRRQPEG…RYSNMHYSRQ (386 aa)). Desmoglein repeat repeat units lie at residues 884–910 (TLSE…IVTE) and 911–941 (TYTT…ETVM). Residues 1014-1041 (ISQTTGSTSPMTSQHRVTRYSNMHYSRQ) are disordered.

Interacts with JUP. In terms of tissue distribution, strongly expressed in the skin; during the anagen stage of hair follicles in the matrix, precortex and inner rooth sheath.

The protein resides in the cell membrane. The protein localises to the cell junction. It localises to the desmosome. In terms of biological role, a component of desmosome cell-cell junctions which are required for positive regulation of cellular adhesion. Coordinates the transition from proliferation to differentiation in hair follicle keratinocytes. Plays a role in moderating lymphocyte migration to inflamed skin and maintaining homeostasis of the epidermal inflammatory response. In Mus musculus (Mouse), this protein is Desmoglein-4 (Dsg4).